Consider the following 778-residue polypeptide: Ribonucleoside-diphosphate reductase large subunit (778 aa).

Substrate is bound by residues serine 177, 192–193 (SC), glycine 221, 419–423 (NLCIE), and 613–617 (PTATS). A disulfide bridge links cysteine 193 with cysteine 439. The active-site Proton acceptor is the asparagine 419. Cysteine 421 acts as the Cysteine radical intermediate in catalysis. The active-site Proton acceptor is the glutamate 423.

It belongs to the ribonucleoside diphosphate reductase large chain family. As to quaternary structure, heterotetramer composed of a homodimer of the large subunit (R1) and a homodimer of the small subunit (R2). Larger multisubunit protein complex are also active, composed of (R1)n(R2)n.

The enzyme catalyses a 2'-deoxyribonucleoside 5'-diphosphate + [thioredoxin]-disulfide + H2O = a ribonucleoside 5'-diphosphate + [thioredoxin]-dithiol. With respect to regulation, under complex allosteric control mediated by deoxynucleoside triphosphates and ATP binding. The type of nucleotide bound at the specificity site determines substrate preference. It seems probable that ATP makes the enzyme reduce CDP and UDP, dGTP favors ADP reduction and dTTP favors GDP reduction. Ribonucleoside-diphosphate reductase holoenzyme provides the precursors necessary for viral DNA synthesis. Allows virus growth in non-dividing cells. Catalyzes the biosynthesis of deoxyribonucleotides from the corresponding ribonucleotides. In Ornithodoros (relapsing fever ticks), this protein is Ribonucleoside-diphosphate reductase large subunit.